We begin with the raw amino-acid sequence, 1275 residues long: O-antigen biosynthesis protein RfbC (1275 aa).

In terms of biological role, involved in O-antigen biosynthesis. The chain is O-antigen biosynthesis protein RfbC (rfbC) from Myxococcus xanthus.